The following is a 325-amino-acid chain: Probable tRNA-dihydrouridine synthase 2 (325 aa).

Position 18–20 (18–20) interacts with FMN; sequence PME. Cys-105 serves as the catalytic Proton donor. FMN-binding positions include Lys-143, 208–210, and 232–233; these read NGD and GR.

This sequence belongs to the Dus family. It depends on FMN as a cofactor.

The catalysed reaction is a 5,6-dihydrouridine in tRNA + NAD(+) = a uridine in tRNA + NADH + H(+). It catalyses the reaction a 5,6-dihydrouridine in tRNA + NADP(+) = a uridine in tRNA + NADPH + H(+). Catalyzes the synthesis of 5,6-dihydrouridine (D), a modified base found in the D-loop of most tRNAs, via the reduction of the C5-C6 double bond in target uridines. The protein is Probable tRNA-dihydrouridine synthase 2 (dus2) of Bacillus subtilis (strain 168).